The chain runs to 396 residues: Elongation factor Tu (396 aa).

The tr-type G domain maps to 10 to 206; that stretch reads KPHCNIGTIG…AVDAYIPQPE (197 aa). Residues 19–26 form a G1 region; it reads GHVDHGKT. 19–26 lines the GTP pocket; it reads GHVDHGKT. A Mg(2+)-binding site is contributed by threonine 26. Residues 60-64 form a G2 region; the sequence is GITIS. The interval 81–84 is G3; that stretch reads DCPG. GTP-binding positions include 81-85 and 136-139; these read DCPGH and NKVD. The segment at 136 to 139 is G4; sequence NKVD. The tract at residues 174–176 is G5; sequence SAL.

Belongs to the TRAFAC class translation factor GTPase superfamily. Classic translation factor GTPase family. EF-Tu/EF-1A subfamily. In terms of assembly, monomer.

The protein resides in the cytoplasm. It catalyses the reaction GTP + H2O = GDP + phosphate + H(+). Its function is as follows. GTP hydrolase that promotes the GTP-dependent binding of aminoacyl-tRNA to the A-site of ribosomes during protein biosynthesis. This Gluconacetobacter diazotrophicus (strain ATCC 49037 / DSM 5601 / CCUG 37298 / CIP 103539 / LMG 7603 / PAl5) protein is Elongation factor Tu.